We begin with the raw amino-acid sequence, 86 residues long: Triosephosphate isomerase (86 aa).

Catalysis depends on E62, which acts as the Proton acceptor.

Belongs to the triosephosphate isomerase family. In terms of assembly, homodimer.

The enzyme catalyses D-glyceraldehyde 3-phosphate = dihydroxyacetone phosphate. Its pathway is carbohydrate biosynthesis; gluconeogenesis. It functions in the pathway carbohydrate degradation; glycolysis; D-glyceraldehyde 3-phosphate from glycerone phosphate: step 1/1. In Platanus orientalis (Oriental plane-tree), this protein is Triosephosphate isomerase.